A 63-amino-acid chain; its full sequence is MIVVPVKEGENIEKALKKFKRKFEKTGVVKELRARQQFDKPSVLNRLKRERAIYVQKLQQVEE.

The protein belongs to the bacterial ribosomal protein bS21 family.

The sequence is that of Small ribosomal subunit protein bS21 from Phocaeicola vulgatus (strain ATCC 8482 / DSM 1447 / JCM 5826 / CCUG 4940 / NBRC 14291 / NCTC 11154) (Bacteroides vulgatus).